The chain runs to 215 residues: Histone H1.1 (215 aa).

A disordered region spans residues 1–43; it reads MSETVPPAPAASAAPEKPLAGKKAKKPAKAAAASKKKPAGPSV. Position 2 is an N-acetylserine (Ser-2). Ser-2 and Ser-12 each carry phosphoserine. The residue at position 17 (Lys-17) is an N6-acetyllysine. Over residues 20–38 the composition is skewed to basic residues; the sequence is AGKKAKKPAKAAAASKKKP. Residue Lys-37 is modified to N6-(beta-hydroxybutyryl)lysine. Positions 39-112 constitute an H15 domain; the sequence is AGPSVSELIV…GASGSFKLNK (74 aa). Position 44 is a phosphoserine (Ser-44). Residue Lys-55 is modified to N6-(beta-hydroxybutyryl)lysine. Residue Arg-57 is modified to Citrulline. Lys-67 carries the N6-(beta-hydroxybutyryl)lysine modification. An N6-acetyllysine modification is found at Lys-78. Lys-88 is subject to N6-(beta-hydroxybutyryl)lysine. Lys-93 carries the N6-(beta-hydroxybutyryl)lysine; alternate modification. N6-acetyllysine; alternate is present on Lys-93. A disordered region spans residues 94–215; it reads GTLVQTKGTG…KPKKAAPKKK (122 aa). A Phosphoserine modification is found at Ser-107. Lys-109 carries the post-translational modification N6-(beta-hydroxybutyryl)lysine. The segment covering 122–147 has biased composition (low complexity); the sequence is GASKVATKTKATGASKKLKKATGASK. Lys-125 bears the N6-acetyllysine mark. Composition is skewed to basic residues over residues 148 to 181 and 188 to 215; these read KSVK…KKVA and KAVK…PKKK. Thr-204 carries the post-translational modification Phosphothreonine.

Belongs to the histone H1/H5 family. As to quaternary structure, interacts with DFFB. H1 histones are progressively phosphorylated during the cell cycle, becoming maximally phosphorylated during late G2 phase and M phase, and being dephosphorylated sharply thereafter. In terms of processing, citrullination at Arg-57 (H1R54ci) by PADI4 takes place within the DNA-binding site of H1 and results in its displacement from chromatin and global chromatin decondensation, thereby promoting pluripotency and stem cell maintenance.

It localises to the nucleus. The protein resides in the chromosome. Its function is as follows. Histone H1 protein binds to linker DNA between nucleosomes forming the macromolecular structure known as the chromatin fiber. Histones H1 are necessary for the condensation of nucleosome chains into higher-order structured fibers. Also acts as a regulator of individual gene transcription through chromatin remodeling, nucleosome spacing and DNA methylation. This chain is Histone H1.1, found in Homo sapiens (Human).